The chain runs to 256 residues: Thiazole synthase (256 aa).

Catalysis depends on Lys-95, which acts as the Schiff-base intermediate with DXP. 1-deoxy-D-xylulose 5-phosphate is bound by residues Gly-156, 182–183 (AG), and 204–205 (NT).

Belongs to the ThiG family. In terms of assembly, homotetramer. Forms heterodimers with either ThiH or ThiS.

The protein resides in the cytoplasm. It carries out the reaction [ThiS sulfur-carrier protein]-C-terminal-Gly-aminoethanethioate + 2-iminoacetate + 1-deoxy-D-xylulose 5-phosphate = [ThiS sulfur-carrier protein]-C-terminal Gly-Gly + 2-[(2R,5Z)-2-carboxy-4-methylthiazol-5(2H)-ylidene]ethyl phosphate + 2 H2O + H(+). It functions in the pathway cofactor biosynthesis; thiamine diphosphate biosynthesis. Its function is as follows. Catalyzes the rearrangement of 1-deoxy-D-xylulose 5-phosphate (DXP) to produce the thiazole phosphate moiety of thiamine. Sulfur is provided by the thiocarboxylate moiety of the carrier protein ThiS. In vitro, sulfur can be provided by H(2)S. This chain is Thiazole synthase, found in Shigella dysenteriae serotype 1 (strain Sd197).